We begin with the raw amino-acid sequence, 681 residues long: Cell cycle checkpoint protein RAD17 (681 aa).

The RAD1-binding motif signature appears at aspartate 17–aspartate 25. Positions valine 42 to alanine 63 are disordered. A Phosphothreonine modification is found at threonine 55. Phosphoserine is present on residues serine 71 and serine 86. Glycine 137 to threonine 144 lines the ATP pocket. Serine 359 carries the post-translational modification Phosphoserine. Residues leucine 432–threonine 681 are interaction with MCM7. The disordered stretch occupies residues histidine 606 to threonine 681. The segment covering glutamate 631 to serine 662 has biased composition (polar residues). Threonine 633 carries the phosphothreonine modification. 2 positions are modified to phosphoserine: serine 646 and serine 656. The span at aspartate 666–threonine 681 shows a compositional bias: acidic residues.

Belongs to the rad17/RAD24 family. As to quaternary structure, part of a DNA-binding complex containing RFC2, RFC3, RFC4 and RFC5. Interacts with RAD1 and RAD9 within the 9-1-1 (RAD1-RAD9-HUS1) complex. Interacts with RAD9B, POLE, SNU13 and MCM7. DNA damage promotes interaction with ATR or ATM and disrupts interaction with the 9-1-1 (RAD1-RAD9-HUS1) complex. Interacts (when phosphorylated) with NBN; promoting recruitment of the MRN complex to DNA damage sites. Phosphorylated. Phosphorylation on Ser-646 and Ser-656 is cell cycle-regulated, enhanced by genotoxic stress, and required for activation of checkpoint signaling. Phosphorylation is mediated by ATR upon UV or replication arrest, whereas it may be mediated both by ATR and ATM upon ionizing radiation. Phosphorylation on both sites is required for interaction with RAD1 but dispensable for interaction with RFC3 or RFC4. Phosphorylation at Thr-633 by ATM in response to DNA damage promotes interaction with NBN and recruitment of the MRN complex to DNA damage sites.

The protein localises to the nucleus. Its subcellular location is the chromosome. In terms of biological role, essential for sustained cell growth, maintenance of chromosomal stability, and ATR-dependent checkpoint activation upon DNA damage. Has a weak ATPase activity required for binding to chromatin. Participates in the recruitment of the 9-1-1 (RAD1-RAD9-HUS1) complex and RHNO1 onto chromatin, and in CHEK1 activation. Involved in homologous recombination by mediating recruitment of the MRN complex to DNA damage sites. May also serve as a sensor of DNA replication progression. The sequence is that of Cell cycle checkpoint protein RAD17 (RAD17) from Pongo abelii (Sumatran orangutan).